The following is a 431-amino-acid chain: UDP-N-acetylmuramate--L-alanine ligase (431 aa).

108-114 (GAHGKST) serves as a coordination point for ATP.

The protein belongs to the MurCDEF family.

It is found in the cytoplasm. The enzyme catalyses UDP-N-acetyl-alpha-D-muramate + L-alanine + ATP = UDP-N-acetyl-alpha-D-muramoyl-L-alanine + ADP + phosphate + H(+). It functions in the pathway cell wall biogenesis; peptidoglycan biosynthesis. Functionally, cell wall formation. This is UDP-N-acetylmuramate--L-alanine ligase from Campylobacter jejuni subsp. jejuni serotype O:23/36 (strain 81-176).